A 362-amino-acid polypeptide reads, in one-letter code: Flagellar P-ring protein (362 aa).

Residues 1–15 (MLAAALMSAAFGAHA) form the signal peptide.

This sequence belongs to the FlgI family. In terms of assembly, the basal body constitutes a major portion of the flagellar organelle and consists of four rings (L,P,S, and M) mounted on a central rod.

Its subcellular location is the periplasm. The protein localises to the bacterial flagellum basal body. Its function is as follows. Assembles around the rod to form the L-ring and probably protects the motor/basal body from shearing forces during rotation. The sequence is that of Flagellar P-ring protein from Pseudomonas fluorescens (strain Pf0-1).